Reading from the N-terminus, the 334-residue chain is Galactinol synthase 4 (334 aa).

The active site involves Lys104. Mn(2+) contacts are provided by Asp120, Asp122, and His258.

The protein belongs to the glycosyltransferase 8 family. Galactosyltransferase subfamily. Requires a divalent metal cation as cofactor.

The protein resides in the cytoplasm. The catalysed reaction is myo-inositol + UDP-alpha-D-galactose = alpha-D-galactosyl-(1-&gt;3)-1D-myo-inositol + UDP + H(+). In terms of biological role, galactinol synthase involved in the biosynthesis of raffinose family oligosaccharides (RFOs) that function as osmoprotectants. May promote plant stress tolerance. The sequence is that of Galactinol synthase 4 (GOLS4) from Arabidopsis thaliana (Mouse-ear cress).